The primary structure comprises 306 residues: Ornithine carbamoyltransferase (306 aa).

Residues 53–56 (STRT), Q80, R104, and 131–134 (HPCQ) contribute to the carbamoyl phosphate site. L-ornithine contacts are provided by residues N162, D219, and 223 to 224 (SM). Carbamoyl phosphate is bound by residues 259 to 260 (CL) and R287.

It belongs to the aspartate/ornithine carbamoyltransferase superfamily. OTCase family.

The protein localises to the cytoplasm. It catalyses the reaction carbamoyl phosphate + L-ornithine = L-citrulline + phosphate + H(+). It participates in amino-acid biosynthesis; L-arginine biosynthesis; L-arginine from L-ornithine and carbamoyl phosphate: step 1/3. Functionally, reversibly catalyzes the transfer of the carbamoyl group from carbamoyl phosphate (CP) to the N(epsilon) atom of ornithine (ORN) to produce L-citrulline. The protein is Ornithine carbamoyltransferase of Pseudomonas syringae pv. tomato (strain ATCC BAA-871 / DC3000).